The following is a 200-amino-acid chain: ATP-dependent Clp protease proteolytic subunit (200 aa).

The active-site Nucleophile is the S102. H127 is a catalytic residue.

It belongs to the peptidase S14 family. In terms of assembly, fourteen ClpP subunits assemble into 2 heptameric rings which stack back to back to give a disk-like structure with a central cavity, resembling the structure of eukaryotic proteasomes.

The protein resides in the cytoplasm. The catalysed reaction is Hydrolysis of proteins to small peptides in the presence of ATP and magnesium. alpha-casein is the usual test substrate. In the absence of ATP, only oligopeptides shorter than five residues are hydrolyzed (such as succinyl-Leu-Tyr-|-NHMec, and Leu-Tyr-Leu-|-Tyr-Trp, in which cleavage of the -Tyr-|-Leu- and -Tyr-|-Trp bonds also occurs).. Its function is as follows. Cleaves peptides in various proteins in a process that requires ATP hydrolysis. Has a chymotrypsin-like activity. Plays a major role in the degradation of misfolded proteins. This chain is ATP-dependent Clp protease proteolytic subunit, found in Dehalococcoides mccartyi (strain ATCC BAA-2100 / JCM 16839 / KCTC 5957 / BAV1).